Consider the following 60-residue polypeptide: Insect toxin mu-NPTX-Nc1a (60 aa).

An N-terminal signal peptide occupies residues 1 to 19 (MIYQVVLLLLVSPAPVSAA).

In terms of processing, contains 4 disulfide bonds. Expressed by the venom gland.

The protein localises to the secreted. In terms of biological role, insect-specific toxin. Blocks voltage-gated potassium and sodium channels. The chain is Insect toxin mu-NPTX-Nc1a from Trichonephila clavata (Joro spider).